The primary structure comprises 1931 residues: Chitin synthase 5 (1931 aa).

Residues 11 to 777 (LGVTDLSSLA…LFRFLEDRLR (767 aa)) enclose the Myosin motor domain. Residue 122 to 129 (GPTGSGKS) participates in ATP binding. 3 N-linked (GlcNAc...) asparagine glycosylation sites follow: asparagine 510, asparagine 538, and asparagine 676. An actin-binding region spans residues 655 to 677 (VDSLLKSFDQTQTWYIFALRPND). The interval 798-817 (DPFSPHRYQPTSFDSQDHVY) is disordered. N-linked (GlcNAc...) asparagine glycosylation is present at asparagine 842. A run of 2 helical transmembrane segments spans residues 912 to 932 (WVWL…SKIA) and 951 to 971 (MIIW…GPVI). N-linked (GlcNAc...) asparagine glycans are attached at residues asparagine 1062, asparagine 1078, and asparagine 1146. A helical transmembrane segment spans residues 1220–1240 (ILLALSCVMVAVIGFKFLSAL). Asparagine 1583 carries N-linked (GlcNAc...) asparagine glycosylation. The next 3 membrane-spanning stretches (helical) occupy residues 1615-1635 (LSTI…YLIV), 1641-1661 (IPTL…MIFI), and 1668-1688 (MIAW…LLPL). The tract at residues 1826–1847 (AHRPSLDDTSSFHQPYQPAPRP) is disordered. Positions 1875–1930 (AITDSQLERSIRKICANAELDKLTKKGVRKELEREYGVELTERREAINRLVEKVLT) constitute a DEK-C domain.

It in the N-terminal section; belongs to the TRAFAC class CC myosin-kinesin ATPase superfamily. Myosin family. The protein in the C-terminal section; belongs to the chitin synthase family. Class V subfamily.

It localises to the cell membrane. The protein resides in the cell septum. The protein localises to the cell tip. It catalyses the reaction [(1-&gt;4)-N-acetyl-beta-D-glucosaminyl](n) + UDP-N-acetyl-alpha-D-glucosamine = [(1-&gt;4)-N-acetyl-beta-D-glucosaminyl](n+1) + UDP + H(+). Functionally, polymerizes chitin, a structural polymer of the cell wall and septum, by transferring the sugar moiety of UDP-GlcNAc to the non-reducing end of the growing chitin polymer. Produces a large proportion of the chitin that is not deacetylated to chitosan. The protein is Chitin synthase 5 of Cryptococcus neoformans var. grubii serotype A (strain H99 / ATCC 208821 / CBS 10515 / FGSC 9487) (Filobasidiella neoformans var. grubii).